The chain runs to 108 residues: UPF0102 protein Shewmr4_3685 (108 aa).

This sequence belongs to the UPF0102 family.

The polypeptide is UPF0102 protein Shewmr4_3685 (Shewanella sp. (strain MR-4)).